Reading from the N-terminus, the 718-residue chain is Nucleolar protein 11 (718 aa).

Residue Lys-346 is modified to N6-methyllysine.

Interacts with UTP4. Interacts with FBL/fibrillarin in a transcription-dependent manner. May associate with the proposed t-UTP subcomplex of the SSU processome containing at least UTP4, WDR43, HEATR1, UTP15, WDR75.

The protein resides in the nucleus. The protein localises to the nucleolus. Ribosome biogenesis factor. May be required for both optimal rDNA transcription and small subunit (SSU) pre-rRNA processing at sites A', A0, 1 and 2b. This is Nucleolar protein 11 (NOL11) from Bos taurus (Bovine).